Reading from the N-terminus, the 248-residue chain is 3-deoxy-manno-octulosonate cytidylyltransferase (248 aa).

Belongs to the KdsB family.

The protein localises to the cytoplasm. The enzyme catalyses 3-deoxy-alpha-D-manno-oct-2-ulosonate + CTP = CMP-3-deoxy-beta-D-manno-octulosonate + diphosphate. The protein operates within nucleotide-sugar biosynthesis; CMP-3-deoxy-D-manno-octulosonate biosynthesis; CMP-3-deoxy-D-manno-octulosonate from 3-deoxy-D-manno-octulosonate and CTP: step 1/1. It functions in the pathway bacterial outer membrane biogenesis; lipopolysaccharide biosynthesis. Activates KDO (a required 8-carbon sugar) for incorporation into bacterial lipopolysaccharide in Gram-negative bacteria. The chain is 3-deoxy-manno-octulosonate cytidylyltransferase from Erwinia tasmaniensis (strain DSM 17950 / CFBP 7177 / CIP 109463 / NCPPB 4357 / Et1/99).